The chain runs to 79 residues: Sec-independent protein translocase protein TatA (79 aa).

A helical membrane pass occupies residues Met1–Phe21. A compositionally biased stretch (basic and acidic residues) spans Lys52–Lys61. The disordered stretch occupies residues Lys52 to Ala79.

This sequence belongs to the TatA/E family. As to quaternary structure, the Tat system comprises two distinct complexes: a TatABC complex, containing multiple copies of TatA, TatB and TatC subunits, and a separate TatA complex, containing only TatA subunits. Substrates initially bind to the TatABC complex, which probably triggers association of the separate TatA complex to form the active translocon.

The protein localises to the cell inner membrane. Functionally, part of the twin-arginine translocation (Tat) system that transports large folded proteins containing a characteristic twin-arginine motif in their signal peptide across membranes. TatA could form the protein-conducting channel of the Tat system. The protein is Sec-independent protein translocase protein TatA of Campylobacter jejuni subsp. jejuni serotype O:6 (strain 81116 / NCTC 11828).